A 208-amino-acid polypeptide reads, in one-letter code: Pyridoxine/pyridoxamine 5'-phosphate oxidase (208 aa).

FMN is bound by residues 53–58, 68–69, lysine 75, and glutamine 100; these read RTVLLK and YS. Lysine 58 contacts substrate. Positions 118, 122, and 126 each coordinate substrate. Residues 135-136 and tryptophan 180 contribute to the FMN site; that span reads QS. Position 186-188 (186-188) interacts with substrate; that stretch reads RLH. An FMN-binding site is contributed by arginine 190.

The protein belongs to the pyridoxamine 5'-phosphate oxidase family. In terms of assembly, homodimer. Requires FMN as cofactor.

The enzyme catalyses pyridoxamine 5'-phosphate + O2 + H2O = pyridoxal 5'-phosphate + H2O2 + NH4(+). It carries out the reaction pyridoxine 5'-phosphate + O2 = pyridoxal 5'-phosphate + H2O2. Its pathway is cofactor metabolism; pyridoxal 5'-phosphate salvage; pyridoxal 5'-phosphate from pyridoxamine 5'-phosphate: step 1/1. The protein operates within cofactor metabolism; pyridoxal 5'-phosphate salvage; pyridoxal 5'-phosphate from pyridoxine 5'-phosphate: step 1/1. Functionally, catalyzes the oxidation of either pyridoxine 5'-phosphate (PNP) or pyridoxamine 5'-phosphate (PMP) into pyridoxal 5'-phosphate (PLP). The polypeptide is Pyridoxine/pyridoxamine 5'-phosphate oxidase (Xylella fastidiosa (strain Temecula1 / ATCC 700964)).